The following is a 283-amino-acid chain: Protein BASIC PENTACYSTEINE5 (283 aa).

Residues 51 to 86 are alanine-zipper; that stretch reads AVKERNEAVAATKEALASRDEALEQRDKALSERDNA. Residues 63-89 are a coiled coil; that stretch reads KEALASRDEALEQRDKALSERDNAIME. Residues 122-176 form a disordered region; it reads EESHLPNPSPISTIPPEAANTRPTKRKKESKQGKKMGEDLNRPVASPGKKSRKDW. A compositionally biased stretch (basic and acidic residues) spans 151–162; sequence SKQGKKMGEDLN.

It belongs to the BBR/BPC family. As to quaternary structure, homodimer. Heterodimer. Expressed in seedlings, leaves and pistils.

The protein resides in the nucleus. In terms of biological role, transcriptional regulator that specifically binds to GA-rich elements (GAGA-repeats) present in regulatory sequences of genes involved in developmental processes. The sequence is that of Protein BASIC PENTACYSTEINE5 (BPC5) from Arabidopsis thaliana (Mouse-ear cress).